We begin with the raw amino-acid sequence, 315 residues long: Eukaryotic translation initiation factor 2 subunit 1 (315 aa).

One can recognise an S1 motif domain in the interval 17–88; the sequence is EDVVMVNVRS…EKGYIDLSKR (72 aa). The residue at position 49 (S49) is a Phosphoserine; by HRI. S52 is subject to Phosphoserine. K141 carries the N6-acetyllysine modification. Residue S158 is modified to Phosphoserine. Phosphothreonine occurs at positions 279 and 281. Residues 293 to 315 form a disordered region; the sequence is LERENAEVDGDDDAEEMEAKAED. The segment covering 299-308 has biased composition (acidic residues); it reads EVDGDDDAEE.

This sequence belongs to the eIF-2-alpha family. In terms of assembly, eukaryotic translation initiation factor 2 eIF2 is a heterotrimeric complex composed of an alpha (EIF2S1), a beta (EIF2S2) and a gamma (EIF2S3) chain. eIF2 is member of the 43S pre-initiation complex (43S PIC). eIF2 forms a complex with at least CELF1/CUGBP1, CALR, CALR3, EIF2S1, EIF2S2, HSP90B1 and HSPA5. Interaction with METAP2 protects EIF2S1 from inhibitory phosphorylation. Interacts with ABCF1. Associates with ribosomes. Interacts with DDX3X in an RNA-independent manner. In terms of processing, phosphorylation at Ser-49 and Ser-52 stabilizes the eIF-2/GDP/eIF2B complex and prevents GDP/GTP exchange reaction, thus impairing the recycling of eIF-2 between successive rounds of initiation and leading to global inhibition of translation, while concomitantly initiating the preferential translation of integrated stress response (ISR)-specific mRNAs. Substrate for at least 4 kinases: EIF2AK1/HRI, EIF2AK2/PKR, EIF2AK3/PERK and EIF2AK4/GCN2. Phosphorylation on Ser-52 by the EIF2AK4/GCN2 protein kinase occurs in response to amino acid starvation and UV irradiation. Phosphorylation at Ser-52 by the EIF2AK3/PERK protein kinase occurs in response to the unfolded protein response. Phosphorylation at Ser-52 by EIF2AK1/HRI in response to mitochondrial damage promotes relocalization to the mitochondrial surface.

Its subcellular location is the cytoplasm. It localises to the stress granule. The protein resides in the cytosol. The protein localises to the mitochondrion. Its activity is regulated as follows. Activity is regulated by phosphorylation at Ser-49 and Ser-52, which stabilizes the eIF2/GDP/eIF2B complex and prevents the eIF2B-mediated exchange of GDP for GTP, thereby preventing the formation of the 43S pre-initiation complex (43S PIC). This results in the global attenuation of 5' cap-dependent protein synthesis and concomitant translation of ISR-specific mRNAs that contain a short upstream open reading frame (uORF) in their 5' UTR, such as ATF4, ATF5, DDIT3/CHOP and PPP1R15A/GADD34. In terms of biological role, member of the eIF2 complex that functions in the early steps of protein synthesis by forming a ternary complex with GTP and initiator tRNA. This complex binds to a 40S ribosomal subunit, followed by mRNA binding to form a 43S pre-initiation complex. Junction of the 60S ribosomal subunit to form the 80S initiation complex is preceded by hydrolysis of the GTP bound to eIF2 and release of an eIF2-GDP binary complex. In order for eIF2 to recycle and catalyze another round of initiation, the GDP bound to eIF2 must exchange with GTP by way of a reaction catalyzed by eIF2B. EIF2S1/eIF2-alpha is a key component of the integrated stress response (ISR), required for adaptation to various stress: phosphorylation by metabolic-stress sensing protein kinases (EIF2AK1/HRI, EIF2AK2/PKR, EIF2AK3/PERK and EIF2AK4/GCN2) in response to stress converts EIF2S1/eIF2-alpha in a global protein synthesis inhibitor, leading to a attenuation of cap-dependent translation, while concomitantly initiating the preferential translation of ISR-specific mRNAs, such as the transcriptional activators ATF4 and QRICH1, and hence allowing ATF4- and QRICH1-mediated reprogramming. EIF2S1/eIF2-alpha also acts as an activator of mitophagy in response to mitochondrial damage: phosphorylation by EIF2AK1/HRI promotes relocalization to the mitochondrial surface, thereby triggering PRKN-independent mitophagy. The sequence is that of Eukaryotic translation initiation factor 2 subunit 1 (EIF2S1) from Pongo abelii (Sumatran orangutan).